The following is a 354-amino-acid chain: Replication factor C subunit 5 (354 aa).

40 to 47 lines the ATP pocket; sequence YGPSGSGK.

The protein belongs to the activator 1 small subunits family. In terms of assembly, heterotetramer of subunits RFC2, RFC3, RFC4 and RFC5 that can form a complex with RFC1. As to expression, expressed in roots, leaves, shoot apical meristem (SAM), flag leaves and panicles.

Its subcellular location is the nucleus. May be involved in DNA replication and thus regulate cell proliferation. The chain is Replication factor C subunit 5 (RFC5) from Oryza sativa subsp. japonica (Rice).